Consider the following 136-residue polypeptide: Peptide methionine sulfoxide reductase B5 (136 aa).

The region spanning Asp-14 to Ala-135 is the MsrB domain. Positions 53, 56, 99, and 102 each coordinate Zn(2+). An intrachain disulfide couples Cys-71 to Cys-124. Cys-124 serves as the catalytic Nucleophile.

It belongs to the MsrB Met sulfoxide reductase family. Zn(2+) serves as cofactor.

The protein resides in the cytoplasm. Its subcellular location is the cytosol. It carries out the reaction L-methionyl-[protein] + [thioredoxin]-disulfide + H2O = L-methionyl-(R)-S-oxide-[protein] + [thioredoxin]-dithiol. Catalyzes the reduction of methionine sulfoxide (MetSO) to methionine in proteins. Plays a protective role against oxidative stress by restoring activity to proteins that have been inactivated by methionine oxidation. MSRB family specifically reduces the MetSO R-enantiomer. The sequence is that of Peptide methionine sulfoxide reductase B5 (MSRB5) from Oryza sativa subsp. japonica (Rice).